Reading from the N-terminus, the 411-residue chain is ATPase GET3B (411 aa).

Residues 1-67 constitute a chloroplast transit peptide; that stretch reads MATLSSYLLS…RRRNSLQVKS (67 aa). 95–102 is an ATP binding site; the sequence is KGGVGKTS. The active site involves Asp-124. Residue Asn-348 coordinates ATP.

Belongs to the arsA ATPase family.

Its subcellular location is the plastid. The protein resides in the chloroplast stroma. The catalysed reaction is ATP + H2O = ADP + phosphate + H(+). The sequence is that of ATPase GET3B from Arabidopsis thaliana (Mouse-ear cress).